Reading from the N-terminus, the 446-residue chain is DNA repair protein RadA (446 aa).

The segment at Cys10–Cys27 adopts a C4-type zinc-finger fold. ATP is bound at residue Gly91 to Ser98. Residues Lys250–Gly254 carry the RadA KNRFG motif motif. The lon-protease-like stretch occupies residues Glu349 to Arg446.

Belongs to the RecA family. RadA subfamily.

DNA-dependent ATPase involved in processing of recombination intermediates, plays a role in repairing DNA breaks. Stimulates the branch migration of RecA-mediated strand transfer reactions, allowing the 3' invading strand to extend heteroduplex DNA faster. Binds ssDNA in the presence of ADP but not other nucleotides, has ATPase activity that is stimulated by ssDNA and various branched DNA structures, but inhibited by SSB. Does not have RecA's homology-searching function. The chain is DNA repair protein RadA from Rickettsia felis (strain ATCC VR-1525 / URRWXCal2) (Rickettsia azadi).